Consider the following 245-residue polypeptide: 1-(5-phosphoribosyl)-5-[(5-phosphoribosylamino)methylideneamino] imidazole-4-carboxamide isomerase (245 aa).

Aspartate 7 serves as the catalytic Proton acceptor. Aspartate 129 functions as the Proton donor in the catalytic mechanism.

It belongs to the HisA/HisF family.

It is found in the cytoplasm. The catalysed reaction is 1-(5-phospho-beta-D-ribosyl)-5-[(5-phospho-beta-D-ribosylamino)methylideneamino]imidazole-4-carboxamide = 5-[(5-phospho-1-deoxy-D-ribulos-1-ylimino)methylamino]-1-(5-phospho-beta-D-ribosyl)imidazole-4-carboxamide. It functions in the pathway amino-acid biosynthesis; L-histidine biosynthesis; L-histidine from 5-phospho-alpha-D-ribose 1-diphosphate: step 4/9. The chain is 1-(5-phosphoribosyl)-5-[(5-phosphoribosylamino)methylideneamino] imidazole-4-carboxamide isomerase from Shewanella baltica (strain OS195).